We begin with the raw amino-acid sequence, 327 residues long: 2-methoxy-6-polyprenyl-1,4-benzoquinol methylase, mitochondrial (327 aa).

Residues 1 to 49 (MAAPRSCALWSYCGRGWSWAMRGCQLLGLRSSWPGAPLSARLLPQEKRA) constitute a mitochondrion transit peptide. S-adenosyl-L-methionine-binding positions include threonine 117, aspartate 171, and 199-200 (DA).

The protein belongs to the class I-like SAM-binding methyltransferase superfamily. MenG/UbiE family. As to quaternary structure, component of a multi-subunit COQ enzyme complex, composed of at least COQ3, COQ4, COQ5, COQ6, COQ7 and COQ9. Interacts with PYURF; the interaction is direct, stabilizes COQ5 protein and associates PYURF with COQ enzyme complex.

It is found in the mitochondrion inner membrane. It carries out the reaction 2-methoxy-6-(all-trans-decaprenyl)benzene-1,4-diol + S-adenosyl-L-methionine = 5-methoxy-2-methyl-3-(all-trans-decaprenyl)benzene-1,4-diol + S-adenosyl-L-homocysteine + H(+). The protein operates within cofactor biosynthesis; ubiquinone biosynthesis. In terms of biological role, methyltransferase required for the conversion of 2-decaprenyl-6-methoxy-1,4-benzoquinol (DDMQH2) to 2-decaprenyl-3-methyl-6-methoxy-1,4-benzoquinol (DMQH2). The protein is 2-methoxy-6-polyprenyl-1,4-benzoquinol methylase, mitochondrial of Pongo abelii (Sumatran orangutan).